Reading from the N-terminus, the 108-residue chain is Phosphoribosyl-ATP pyrophosphatase (108 aa).

It belongs to the PRA-PH family.

Its subcellular location is the cytoplasm. The catalysed reaction is 1-(5-phospho-beta-D-ribosyl)-ATP + H2O = 1-(5-phospho-beta-D-ribosyl)-5'-AMP + diphosphate + H(+). It participates in amino-acid biosynthesis; L-histidine biosynthesis; L-histidine from 5-phospho-alpha-D-ribose 1-diphosphate: step 2/9. The sequence is that of Phosphoribosyl-ATP pyrophosphatase from Chromobacterium violaceum (strain ATCC 12472 / DSM 30191 / JCM 1249 / CCUG 213 / NBRC 12614 / NCIMB 9131 / NCTC 9757 / MK).